The following is a 122-amino-acid chain: Large ribosomal subunit protein uL14 (122 aa).

Belongs to the universal ribosomal protein uL14 family. As to quaternary structure, part of the 50S ribosomal subunit. Forms a cluster with proteins L3 and L19. In the 70S ribosome, L14 and L19 interact and together make contacts with the 16S rRNA in bridges B5 and B8.

Binds to 23S rRNA. Forms part of two intersubunit bridges in the 70S ribosome. This Myxococcus xanthus (strain DK1622) protein is Large ribosomal subunit protein uL14.